A 264-amino-acid polypeptide reads, in one-letter code: uncharacterized protein (264 aa).

The ABC transporter domain maps to 3-243; that stretch reads LQLDNVSLKR…QILSAFFDTP (241 aa). Residue 35–42 participates in ATP binding; sequence GLNGAGKT.

Belongs to the ABC transporter superfamily.

This is an uncharacterized protein from Bacillus subtilis (strain 168).